The primary structure comprises 423 residues: MTLLPKKPCKSKAKGLLLGALFTSFLLLLYSYVVPPLYPNMAFTTSEAAAPCSPIPNEPVAATPANGSAGGCQPRRDIVFMKTHKTASSTLLNILFRFGQKHELKFAFPNGRNDFHYPSYFARSLVQDYRPGACFNIICNHMRFHYEEVRGLVRPGATFITVIRDPARLFESSFHYFGSVVPLTWKLSSRDKLAEFLQDPDRYYDPSSYNAHYLRNLLFFDLGYDSSLDPASPRVQEHILEVERRFHLVLLQEYFDESLVLLRELLCWDLEDVLYFKLNARRDSPVPRLSGELYRRATAWNLLDVRLYRHFNASFWRKVEAFGRERMAREVAELRQANEHMRHICIDGGQAVGAEAIQDSAMQPWQPLGIKSILGYNLKKSIGPQHEQLCRRMLTPEIQYLSDLGANLWVTKLWKFLRDFLRW.

Residues 1–12 are Cytoplasmic-facing; the sequence is MTLLPKKPCKSK. Residues 13 to 35 form a helical; Signal-anchor for type II membrane protein membrane-spanning segment; sequence AKGLLLGALFTSFLLLLYSYVVP. Residues 36 to 423 lie on the Lumenal side of the membrane; that stretch reads PLYPNMAFTT…WKFLRDFLRW (388 aa). N-linked (GlcNAc...) asparagine glycosylation is found at Asn-66 and Asn-312.

This sequence belongs to the galactose-3-O-sulfotransferase family. Expressed in brain, testis, kidney, stomach, small intestine, liver, and lung. Not detected in heart, skeletal muscle, and spleen.

The protein resides in the golgi apparatus membrane. The catalysed reaction is a beta-D-galactosyl-(1&lt;-&gt;1')-N-acylsphing-4-enine + 3'-phosphoadenylyl sulfate = an N-acyl-1-beta-D-(3-O-sulfo)-galactosyl-sphing-4-enine + adenosine 3',5'-bisphosphate + H(+). The enzyme catalyses a 1-O-alkyl-2-acyl-3-O-(beta-D-galactosyl)-sn-glycerol + 3'-phosphoadenylyl sulfate = a 1-O-alkyl-2-acyl-3-(beta-D-3-sulfogalactosyl)-sn-glycerol + adenosine 3',5'-bisphosphate + H(+). It catalyses the reaction a beta-D-Gal-(1&lt;-&gt;1')-ceramide + 3'-phosphoadenylyl sulfate = 1-(3-O-sulfo-beta-D-galactosyl)-ceramide + adenosine 3',5'-bisphosphate + H(+). It carries out the reaction a 1,2-diacyl-3-O-(beta-D-galactosyl)-sn-glycerol + 3'-phosphoadenylyl sulfate = 1,2-diacyl-3-(3-O-sulfo-beta-D-galactosyl)-sn-glycerol + adenosine 3',5'-bisphosphate + H(+). The catalysed reaction is a beta-D-Gal-(1-&gt;4)-beta-D-Glc-(1&lt;-&gt;1)-Cer(d18:1(4E)) + 3'-phosphoadenylyl sulfate = beta-D-3-sulfogalactosyl-(1-&gt;4)-beta-D-glucosyl-(1&lt;-&gt;1')-N-acylsphing-4-enine + adenosine 3',5'-bisphosphate + H(+). Its pathway is lipid metabolism; sphingolipid metabolism. Catalyzes the transfer of a sulfate group to position 3 of non-reducing beta-galactosyl residues in glycerolipids and sphingolipids, therefore participates in the biosynthesis of sulfoglycolipids. Catalyzes the synthesis of galactosylceramide sulfate (sulfatide), a major lipid component of the myelin sheath and of monogalactosylalkylacylglycerol sulfate (seminolipid), present in spermatocytes. Seems to prefer beta-glycosides at the non-reducing termini of sugar chains attached to a lipid moiety. Also acts on lactosylceramide, galactosyl 1-alkyl-2-sn-glycerol and galactosyl diacylglycerol (in vitro). This Mus musculus (Mouse) protein is Galactosylceramide sulfotransferase.